A 744-amino-acid polypeptide reads, in one-letter code: Adenosylcobalamin-dependent ribonucleoside-triphosphate reductase (744 aa).

An intrachain disulfide couples cysteine 120 to cysteine 424. The effector region-1 stretch occupies residues 148–159 (SMPFSFLFDQLM). An effector region-2 region spans residues 169 to 318 (VNSNIKQIPK…ICNLIGKTVV (150 aa)). Catalysis depends on residues cysteine 413 and glutamate 415. Residues 570-631 (FHYAGYLIQR…SKNFASAGTV (62 aa)) form an adenosylcobalamin-binding-1 region. An adenosylcobalamin-binding-2 region spans residues 690–729 (LKQAPKEPINKKTYEERAALITDDVEEVFTKQNDDQKGLE).

The protein belongs to the class II ribonucleoside-triphosphate reductase family. Monomer. Requires adenosylcob(III)alamin as cofactor.

The catalysed reaction is a 2'-deoxyribonucleoside 5'-triphosphate + [thioredoxin]-disulfide + H2O = a ribonucleoside 5'-triphosphate + [thioredoxin]-dithiol. Allosterically regulated by ATP and dNTP. The chain is Adenosylcobalamin-dependent ribonucleoside-triphosphate reductase (rtpR) from Lactobacillus acidophilus (strain ATCC 700396 / NCK56 / N2 / NCFM).